Reading from the N-terminus, the 594-residue chain is UvrABC system protein C (594 aa).

The GIY-YIG domain occupies 13-99 (HSSGVYQYFD…IKQLKPKYNI (87 aa)). The region spanning 205-240 (DKLIKELELKMERLSNNLRFEEALIYRDRIAKIQKI) is the UVR domain.

This sequence belongs to the UvrC family. In terms of assembly, interacts with UvrB in an incision complex.

It is found in the cytoplasm. Its function is as follows. The UvrABC repair system catalyzes the recognition and processing of DNA lesions. UvrC both incises the 5' and 3' sides of the lesion. The N-terminal half is responsible for the 3' incision and the C-terminal half is responsible for the 5' incision. This Helicobacter pylori (strain HPAG1) protein is UvrABC system protein C.